The following is a 558-amino-acid chain: EF-hand and coiled-coil domain-containing protein 1 (558 aa).

The region spanning 43–78 (GLDQYLQEVFHHLDCRGAGRLPRADFRALCAVLGLN) is the EF-hand domain. A compositionally biased stretch (basic residues) spans 161–170 (LRRPRRRRRP). 2 disordered regions span residues 161–183 (LRRPRRRRRPGSPSLHGGAYGER) and 304–395 (RSEG…QPSG). Coiled coils occupy residues 179–304 (AYGE…RGYR) and 453–495 (VEAE…LNIS).

The polypeptide is EF-hand and coiled-coil domain-containing protein 1 (Efcc1) (Mus musculus (Mouse)).